Consider the following 211-residue polypeptide: V-type ATP synthase subunit D (211 aa).

The protein belongs to the V-ATPase D subunit family.

Its function is as follows. Produces ATP from ADP in the presence of a proton gradient across the membrane. The sequence is that of V-type ATP synthase subunit D from Fusobacterium nucleatum subsp. nucleatum (strain ATCC 25586 / DSM 15643 / BCRC 10681 / CIP 101130 / JCM 8532 / KCTC 2640 / LMG 13131 / VPI 4355).